A 357-amino-acid chain; its full sequence is tRNA N6-adenosine threonylcarbamoyltransferase (357 aa).

2 residues coordinate Fe cation: His115 and His119. Substrate is bound by residues 137 to 141 (LASGG), Asp170, Gly183, and Asn281. Asp309 provides a ligand contact to Fe cation.

It belongs to the KAE1 / TsaD family. Requires Fe(2+) as cofactor.

The protein localises to the cytoplasm. It carries out the reaction L-threonylcarbamoyladenylate + adenosine(37) in tRNA = N(6)-L-threonylcarbamoyladenosine(37) in tRNA + AMP + H(+). In terms of biological role, required for the formation of a threonylcarbamoyl group on adenosine at position 37 (t(6)A37) in tRNAs that read codons beginning with adenine. Is involved in the transfer of the threonylcarbamoyl moiety of threonylcarbamoyl-AMP (TC-AMP) to the N6 group of A37, together with TsaE and TsaB. TsaD likely plays a direct catalytic role in this reaction. This chain is tRNA N6-adenosine threonylcarbamoyltransferase, found in Afipia carboxidovorans (strain ATCC 49405 / DSM 1227 / KCTC 32145 / OM5) (Oligotropha carboxidovorans).